Consider the following 185-residue polypeptide: MISVNDFKTGLTVEVDNDIWQVIEFQHVKPGKGAAFVRSKLRNLRSGNIQEKTFRAGEKVSKAHIENRKMQYLYASGDAHAFMDTNTYDQIEIQGKQIQEQLKFIKENMEVSIVSYENEILGVDLPNNVELTVTETEPGIKGDTASGGSKPATLETGLIVQVPFFINEGDVLVINTSDGKYVSRA.

This sequence belongs to the elongation factor P family.

It is found in the cytoplasm. Its pathway is protein biosynthesis; polypeptide chain elongation. In terms of biological role, involved in peptide bond synthesis. Stimulates efficient translation and peptide-bond synthesis on native or reconstituted 70S ribosomes in vitro. Probably functions indirectly by altering the affinity of the ribosome for aminoacyl-tRNA, thus increasing their reactivity as acceptors for peptidyl transferase. In Oceanobacillus iheyensis (strain DSM 14371 / CIP 107618 / JCM 11309 / KCTC 3954 / HTE831), this protein is Elongation factor P.